Here is a 182-residue protein sequence, read N- to C-terminus: Ferritin heavy chain (182 aa).

Methionine 1 carries the post-translational modification N-acetylmethionine. Threonine 2 carries the N-acetylthreonine; in Ferritin heavy chain, N-terminally processed modification. The Ferritin-like diiron domain occupies 11 to 160 (QNYHQDSEAA…DHVTNLRRMG (150 aa)). Fe cation-binding residues include glutamate 28, glutamate 63, histidine 66, glutamate 108, and glutamine 142.

It belongs to the ferritin family. In terms of assembly, oligomer of 24 subunits. There are two types of subunits: L (light) chain and H (heavy) chain. The major chain can be light or heavy, depending on the species and tissue type. The functional molecule forms a roughly spherical shell with a diameter of 12 nm and contains a central cavity into which the insoluble mineral iron core is deposited. Interacts with NCOA4; NCOA4 promotes targeting of the iron-binding ferritin complex to autolysosomes following starvation or iron depletion.

It is found in the cytoplasm. The protein resides in the lysosome. Its subcellular location is the cytoplasmic vesicle. The protein localises to the autophagosome. It catalyses the reaction 4 Fe(2+) + O2 + 4 H(+) = 4 Fe(3+) + 2 H2O. Functionally, stores iron in a soluble, non-toxic, readily available form. Important for iron homeostasis. Has ferroxidase activity. Iron is taken up in the ferrous form and deposited as ferric hydroxides after oxidation. Also plays a role in delivery of iron to cells. Mediates iron uptake in capsule cells of the developing kidney. Delivery to lysosomes is mediated by the cargo receptor NCOA4 for autophagic degradation and release of iron. The protein is Ferritin heavy chain (FTH1) of Equus caballus (Horse).